The primary structure comprises 224 residues: dTTP/UTP pyrophosphatase (224 aa).

Catalysis depends on Asp77, which acts as the Proton acceptor.

This sequence belongs to the Maf family. YhdE subfamily. Requires a divalent metal cation as cofactor.

It is found in the cytoplasm. It catalyses the reaction dTTP + H2O = dTMP + diphosphate + H(+). The catalysed reaction is UTP + H2O = UMP + diphosphate + H(+). Its function is as follows. Nucleoside triphosphate pyrophosphatase that hydrolyzes dTTP and UTP. May have a dual role in cell division arrest and in preventing the incorporation of modified nucleotides into cellular nucleic acids. The chain is dTTP/UTP pyrophosphatase from Dehalococcoides mccartyi (strain ATCC BAA-2100 / JCM 16839 / KCTC 5957 / BAV1).